The primary structure comprises 245 residues: Thiopurine S-methyltransferase (245 aa).

Tryptophan 29–phenylalanine 40 contributes to the S-adenosyl-L-methionine binding site. Phenylalanine 40 is a binding site for substrate. An N6-acetyllysine modification is found at lysine 58. Positions 69, 90, and 152 each coordinate S-adenosyl-L-methionine.

This sequence belongs to the class I-like SAM-binding methyltransferase superfamily. TPMT family. Monomer.

The protein localises to the cytoplasm. It catalyses the reaction S-adenosyl-L-methionine + a thiopurine = S-adenosyl-L-homocysteine + a thiopurine S-methylether.. This is Thiopurine S-methyltransferase (TPMT) from Panthera leo (Lion).